Reading from the N-terminus, the 158-residue chain is Pleckstrin homology domain-containing family J member 1 (158 aa).

One can recognise a PH domain in the interval 15–108; that stretch reads PTQRAAELGM…WIDAIIKASY (94 aa).

This Danio rerio (Zebrafish) protein is Pleckstrin homology domain-containing family J member 1 (plekhj1).